A 276-amino-acid chain; its full sequence is Alpha N-terminal protein methyltransferase 1 (276 aa).

The segment at 1–57 (MTTTLEEQLSDKLQMMDETTDKVQGSSKQKDDSSIAASSDAKTASPSSSDSSTKVAA) is disordered. Low complexity predominate over residues 34–57 (SIAASSDAKTASPSSSDSSTKVAA). Residues Gly114, Arg119, 136–138 (EQD), 167–168 (LQ), and Gln182 each bind S-adenosyl-L-methionine.

This sequence belongs to the methyltransferase superfamily. NTM1 family.

The enzyme catalyses N-terminal L-alanyl-L-prolyl-L-lysyl-[protein] + 3 S-adenosyl-L-methionine = N-terminal N,N,N-trimethyl-L-alanyl-L-prolyl-L-lysyl-[protein] + 3 S-adenosyl-L-homocysteine + 3 H(+). It carries out the reaction N-terminal L-seryl-L-prolyl-L-lysyl-[protein] + 3 S-adenosyl-L-methionine = N-terminal N,N,N-trimethyl-L-seryl-L-prolyl-L-lysyl-[protein] + 3 S-adenosyl-L-homocysteine + 3 H(+). The catalysed reaction is N-terminal L-prolyl-L-prolyl-L-lysyl-[protein] + 2 S-adenosyl-L-methionine = N-terminal N,N-dimethyl-L-prolyl-L-prolyl-L-lysyl-[protein] + 2 S-adenosyl-L-homocysteine + 2 H(+). Functionally, alpha-N-methyltransferase that methylates the N-terminus of target proteins containing the N-terminal motif [Ala/Pro/Ser]-Pro-Lys when the initiator Met is cleaved. Specifically catalyzes mono-, di- or tri-methylation of exposed alpha-amino group of Ala or Ser residue in the [Ala/Ser]-Pro-Lys motif and mono- or di-methylation of Pro in the Pro-Pro-Lys motif. The chain is Alpha N-terminal protein methyltransferase 1 (Ntmt) from Drosophila melanogaster (Fruit fly).